The chain runs to 589 residues: O-fucosyltransferase 11 (589 aa).

The interval 1–37 is disordered; that stretch reads MKSKIHHQPNGSNNGVVSSNDNGCRSESPSPPLSPNR. Over residues 10-23 the composition is skewed to low complexity; sequence NGSNNGVVSSNDNG. The chain crosses the membrane as a helical; Signal-anchor for type II membrane protein span at residues 68–88; the sequence is MIYASGLLMCVGPFSGLVGWV. N-linked (GlcNAc...) asparagine glycosylation is found at asparagine 112, asparagine 136, and asparagine 239. A substrate-binding site is contributed by 332 to 334; it reads HLR. Residues asparagine 405, asparagine 406, and asparagine 564 are each glycosylated (N-linked (GlcNAc...) asparagine).

It belongs to the glycosyltransferase GT106 family.

It is found in the membrane. The protein operates within glycan metabolism. This is O-fucosyltransferase 11 from Arabidopsis thaliana (Mouse-ear cress).